A 349-amino-acid chain; its full sequence is Protein AMBP (349 aa).

The N-terminal stretch at 1 to 19 (MQGLRTLFLLLTACLASRA) is a signal peptide. Asn33 carries an N-linked (GlcNAc...) asparagine glycan. 2 residues coordinate 3-hydroxy-L-kynurenine: Cys52 and Lys110. A disulfide bridge links Cys90 with Cys187. The N-linked (GlcNAc...) asparagine glycan is linked to Asn114. 3-hydroxy-L-kynurenine is bound by residues Lys136 and Lys148. Ser214 is a glycosylation site (O-linked (Xyl...) (chondroitin sulfate) serine). Cystine bridges form between Cys230/Cys280, Cys239/Cys263, Cys255/Cys276, Cys286/Cys336, Cys295/Cys319, and Cys311/Cys332. 2 BPTI/Kunitz inhibitor domains span residues 230–280 (CQLN…LQTC) and 286–336 (CNLP…KEYC). A glycan (N-linked (GlcNAc...) asparagine) is linked at Asn233.

This sequence in the N-terminal section; belongs to the calycin superfamily. Lipocalin family. In terms of assembly, monomer. Homodimer. In plasma, it occurs as a monomer or dimer and in covalently-linked complexes with immunoglobulin A (IgA), ALB/albumin and F2/prothrombin. Chromophore-bound alpha-1-microglobulin interacts with the constant region of immunoglobulin A. Chromophore-bound alpha-1-microglobulin interacts with ALB with molar ratio 2:1 and 1:1; this interaction does not prevent fatty acid binding to ALB. Interacts with F2/prothrombin (via N-terminus) with molar ratio 2:1 and 1:1; this interaction does not prevent the activation of prothrombin to thrombin. Interacts with NDUFAB1, a subunit of mitochondrial complex I. Interacts with FN1. As to quaternary structure, I-alpha-I plasma protease inhibitors are assembled from one or two heavy chains (HC) and one light chain, bikunin. Inter-alpha-inhibitor (I-alpha-I) is composed of ITIH1/HC1, ITIH2/HC2 and bikunin, and pre-alpha-inhibitor (P-alpha-I) of ITIH3/HC3 and bikunin. Interacts with TNFAIP6 (via Link domain). Monomer. Also occurs as a complex with tryptase in mast cells. Post-translationally, the precursor is proteolytically processed into separately functioning proteins. 3-hydroxykynurenine, an oxidized tryptophan metabolite that is common in biological fluids, reacts with Cys-53, Lys-111, Lys-137, and Lys-149 to form heterogeneous polycyclic chromophores including hydroxanthommatin. The reaction by alpha-1-microglobulin is autocatalytic; the human protein forms chromophore even when expressed in insect and bacterial cells. The chromophore can react with accessible cysteines forming non-reducible thioether cross-links with other molecules of alpha-1-microglobulin or with other proteins such as Ig alpha-1 chain C region 'Cys-352'. In terms of processing, heavy chains are interlinked with bikunin via a chondroitin 4-sulfate bridge to the C-terminal aspartate. Post-translationally, proteolytically cleaved by PRSS3 at Kunitz domain 2. As to expression, expressed by the liver and secreted in plasma (at protein level).

The protein resides in the secreted. Its subcellular location is the endoplasmic reticulum. It localises to the cytoplasm. It is found in the cytosol. The protein localises to the cell membrane. The protein resides in the nucleus membrane. Its subcellular location is the mitochondrion inner membrane. It localises to the extracellular space. It is found in the extracellular matrix. In terms of biological role, antioxidant and tissue repair protein with reductase, heme-binding and radical-scavenging activities. Removes and protects against harmful oxidants and repairs macromolecules in intravascular and extravascular spaces and in intracellular compartments. Intravascularly, plays a regulatory role in red cell homeostasis by preventing heme- and reactive oxygen species-induced cell damage. Binds and degrades free heme to protect fetal and adult red blood cells from hemolysis. Reduces extracellular methemoglobin, a Fe3+ (ferric) form of hemoglobin that cannot bind oxygen, back to the Fe2+ (ferrous) form deoxyhemoglobin, which has oxygen-carrying potential. Upon acute inflammation, inhibits oxidation of low-density lipoprotein particles by MPO and limits vascular damage. Extravascularly, protects from oxidation products formed on extracellular matrix structures and cell membranes. Catalyzes the reduction of carbonyl groups on oxidized collagen fibers and preserves cellular and extracellular matrix ultrastructures. Importantly, counteracts the oxidative damage at blood-placenta interface, preventing leakage of free fetal hemoglobin into the maternal circulation. Intracellularly, has a role in maintaining mitochondrial redox homeostasis. Bound to complex I of the respiratory chain of mitochondria, may scavenge free radicals and preserve mitochondrial ATP synthesis. Protects renal tubule epithelial cells from heme-induced oxidative damage to mitochondria. Reduces cytochrome c from Fe3+ (ferric) to the Fe2+ (ferrous) state through formation of superoxide anion radicals in the presence of ascorbate or NADH/NADPH electron donor cofactors, ascorbate being the preferred cofactor. Has a chaperone role in facilitating the correct folding of bikunin in the endoplasmic reticulum compartment. Functionally, kunitz-type serine protease inhibitor and structural component of extracellular matrix with a role in extracellular space remodeling and cell adhesion. Among others, has antiprotease activity toward kallikrein, a protease involved in airway inflammation; inhibits GZMK/granzyme, a granule-stored serine protease involved in NK and T cell cytotoxic responses; and inhibits PLG/plasmin, a protease required for activation of matrix metalloproteinases. As part of I-alpha-I complex, provides for the heavy chains to be transferred from I-alpha-I complex to hyaluronan in the presence of TNFAIP6, in a dynamic process that releases free bikunin and remodels extracellular matrix proteoglycan structures. Free bikunin, but not its heavy chain-bound form, acts as a potent protease inhibitor in airway secretions. Part of hyaluronan-rich extracellular matrix that surrounds oocyte during cumulus oophorus expansion, an indispensable process for proper ovulation. Also inhibits calcium oxalate crystallization. Kunitz-type serine protease inhibitor. Has high catalytic efficiency for F10/blood coagulation factor Xa and may act as an anticoagulant by inhibiting prothrombin activation. Inhibits trypsin and mast cell CMA1/chymase and tryptase proteases. This is Protein AMBP (Ambp) from Mus musculus (Mouse).